We begin with the raw amino-acid sequence, 400 residues long: Methylthioribose kinase (400 aa).

ATP-binding positions include Asn-40, Lys-57, and 111–113 (EDL). Substrate is bound at residue Asp-229. 246 to 248 (DAE) contacts ATP. Substrate is bound at residue Arg-344.

Belongs to the methylthioribose kinase family. In terms of assembly, homodimer.

It carries out the reaction 5-(methylsulfanyl)-D-ribose + ATP = 5-(methylsulfanyl)-alpha-D-ribose 1-phosphate + ADP + H(+). The protein operates within amino-acid biosynthesis; L-methionine biosynthesis via salvage pathway; S-methyl-5-thio-alpha-D-ribose 1-phosphate from S-methyl-5'-thioadenosine (hydrolase route): step 2/2. Its function is as follows. Catalyzes the phosphorylation of methylthioribose into methylthioribose-1-phosphate. In Pectobacterium atrosepticum (strain SCRI 1043 / ATCC BAA-672) (Erwinia carotovora subsp. atroseptica), this protein is Methylthioribose kinase.